The chain runs to 295 residues: Glycine N-methyltransferase (295 aa).

V2 is modified (N-acetylvaline). (6S)-5-methyl-5,6,7,8-tetrahydrofolate contacts are provided by S4 and Y6. The residue at position 10 (S10) is a Phosphoserine. Residues Y22, W31, Y34, and R41 each contribute to the S-adenosyl-L-methionine site. Y34 is modified (phosphotyrosine). K46 carries the post-translational modification N6-succinyllysine. S-adenosyl-L-methionine contacts are provided by residues A65, 86 to 88 (DAS), 117 to 118 (NW), 139 to 142 (LGNS), and R178. N6-succinyllysine occurs at positions 193, 198, and 203. (6S)-5-methyl-5,6,7,8-tetrahydrofolate is bound at residue H217. S-adenosyl-L-methionine is bound at residue Y223. R242 serves as a coordination point for (6S)-5-methyl-5,6,7,8-tetrahydrofolate.

The protein belongs to the class I-like SAM-binding methyltransferase superfamily. Glycine N-methyltransferase family. As to quaternary structure, homotetramer. Expressed only in liver, pancreas, and prostate.

It is found in the cytoplasm. The enzyme catalyses glycine + S-adenosyl-L-methionine = sarcosine + S-adenosyl-L-homocysteine + H(+). With respect to regulation, inhibited by 5-methyltetrahydrofolate monoglutamate and by 5-methyltetrahydrofolate pentaglutamate, inhibition is much more effective by the pentaglutamate form than by the monoglutamate form. Two molecules of 5-methyltetrahydrofolate are bound per tetramer. The binding sites are localized between subunits. Inhibitor binding may preclude movements of the polypeptide chain that are necessary for enzyme activity. In terms of biological role, catalyzes the methylation of glycine by using S-adenosylmethionine (AdoMet) to form N-methylglycine (sarcosine) with the concomitant production of S-adenosylhomocysteine (AdoHcy), a reaction regulated by the binding of 5-methyltetrahydrofolate. Plays an important role in the regulation of methyl group metabolism by regulating the ratio between S-adenosyl-L-methionine and S-adenosyl-L-homocysteine. The sequence is that of Glycine N-methyltransferase from Homo sapiens (Human).